Consider the following 1071-residue polypeptide: MTSPAKFKKDKEIIAEYDTQVKEIRAQLTEQMKCLDQQCELRVQLLQDLQDFFRKKAEIEMDYSRNLEKLAERFLAKTRSTKDQQFKKDQNVLSPVNCWNLLLNQVKRESRDHTTLSDIYLNNIIPRFVQVSEDSGRLFKKSKEVGQQLQDDLMKVLNELYSVMKTYHMYNADSISAQSKLKEAEKQEEKQIGKSVKQEDRQTPRSPDSTANVRIEEKHVRRSSVKKIEKMKEKRQAKYTENKLKAIKARNEYLLALEATNASVFKYYIHDLSDIIDQCCDLGYHASLNRALRTFLSAELNLEQSKHEGLDAIENAVENLDATSDKQRLMEMYNNVFCPPMKFEFQPHMGDMASQLCAQQPVQSELVQRRQQLQSRLSTLKIENEEVKKTMEATLQTIQDIVTVEDFDVSDCFQYSNSMESVKSTVSETFMSKPSIAKRRANQQETEQFYFTKMKEYLEGRNLITKLQAKHDLLQKTLGESQRTDCSLARRSSTVRKQDSSQAIPLVVESCIRFISRHGLRHEGVFRVSGSQVEVNDIKNAFERGEDPLAGDQNDHDMDSIAGVLKLYFRGLEHPLFPKDIFHDLIACVTMDNLQERAVHIRKVLLVLPKPTLIIMRYLFAFLNHLSQFSEENMMDPYNLAICFGPSLMSVPEGHDQVSCQAHVNELIKTIIIQHENIFPNPRELEGPIYSRGGSMEDYCDSTHGETISAEDSTQDVTAEHHTSDDECEPIEAIAKFDYVGRTARELSFKKGASLLLYQRASDDWWEGRHNGIDGLIPHQYIVVQDTEDGVVERSSPKSEIEVMSEPPEEKVTARTGASCPSGGHVADIYLANINKQRKRPESGSIRKAFRSDSHGLGSSLTDSSSPGVGASCRPSSQPIMSQNLPKEGPDKCSISGHGSLNSISRHSSLKNRMDSPQIRKTATAGRSKSFNNHRPMDPEVIAQDIEATMNSALNELQELERQSSAKHTPDVVLDTLEPLKTSPVVAPTSEPSSPLHTQLLKDPEPAFQRSASTAGDIACAFRPVKSVKMAAPVKPPATRPKPTVFPKTNATSPGVNSSASPQSTDKSCTV.

One can recognise an F-BAR domain in the interval 22–325 (KEIRAQLTEQ…AVENLDATSD (304 aa)). The segment covering 181-203 (LKEAEKQEEKQIGKSVKQEDRQT) has biased composition (basic and acidic residues). Residues 181-211 (LKEAEKQEEKQIGKSVKQEDRQTPRSPDSTA) are disordered. Position 206 is a phosphoserine (serine 206). The stretch at 363–401 (QSELVQRRQQLQSRLSTLKIENEEVKKTMEATLQTIQDI) forms a coiled coil. 5 positions are modified to phosphoserine: serine 427, serine 500, serine 691, serine 695, and serine 724. Residues 489–679 (ARRSSTVRKQ…TIIIQHENIF (191 aa)) form the Rho-GAP domain. The disordered stretch occupies residues 703–726 (THGETISAEDSTQDVTAEHHTSDD). In terms of domain architecture, SH3 spans 728–787 (CEPIEAIAKFDYVGRTARELSFKKGASLLLYQRASDDWWEGRHNGIDGLIPHQYIVVQDT). Disordered stretches follow at residues 794-820 (RSSP…GASC) and 835-936 (NKQR…NHRP). A Phosphoserine modification is found at serine 795. 3 stretches are compositionally biased toward polar residues: residues 857 to 867 (LGSSLTDSSSP), 874 to 885 (RPSSQPIMSQNL), and 897 to 907 (GHGSLNSISRH). Serine 916 carries the post-translational modification Phosphoserine. The span at 919 to 933 (IRKTATAGRSKSFNN) shows a compositional bias: polar residues. A Symmetric dimethylarginine; by PRMT5 modification is found at arginine 927. At serine 930 the chain carries Phosphoserine. Residues 940 to 968 (EVIAQDIEATMNSALNELQELERQSSAKH) are a coiled coil. The segment at 983–1012 (SPVVAPTSEPSSPLHTQLLKDPEPAFQRSA) is disordered. Serine 990, serine 994, serine 1013, and serine 1027 each carry phosphoserine. Residues 1029-1071 (KMAAPVKPPATRPKPTVFPKTNATSPGVNSSASPQSTDKSCTV) are disordered. Residues 1047–1071 (PKTNATSPGVNSSASPQSTDKSCTV) are compositionally biased toward polar residues.

In terms of assembly, homodimer. Forms a heterooligomer with SRGAP1 and SRGAP3 through its F-BAR domain. Interacts (via SH3 domain) with GPHN. Interacts (via SH3 domain) with FMNL1 (activated by RAC1); regulates the actin filament severing activity of FMNL1 and actin dynamics. Interacts (via SH3 domain) with FMNL3. Interacts with RAC1; specifically stimulates RAC1 GTPase activity. Interacts (via F-BAR domain) with HOMER1. Interacts with ROBO1 and ROBO2. Interacts with FASLG. Interacts with PRMT5. Post-translationally, methylation at Arg-927 is required for the stimulation of cell migration, dimerization and localization at the plasma membrane protrusions.

It is found in the cell membrane. The protein localises to the cell projection. The protein resides in the dendritic spine. It localises to the postsynaptic density. Its subcellular location is the postsynaptic cell membrane. It is found in the lamellipodium. The protein localises to the cytoplasmic vesicle. The protein resides in the phagosome. It localises to the nucleus. Its subcellular location is the cytoplasm. It is found in the cytosol. Its function is as follows. Postsynaptic RAC1 GTPase activating protein (GAP) that plays a key role in neuronal morphogenesis and migration mainly during development of the cerebral cortex. Regulates excitatory and inhibitory synapse maturation and density in cortical pyramidal neurons. SRGAP2/SRGAP2A limits excitatory and inhibitory synapse density through its RAC1-specific GTPase activating activity, while it promotes maturation of both excitatory and inhibitory synapses through its ability to bind to the postsynaptic scaffolding protein HOMER1 at excitatory synapses, and the postsynaptic protein GPHN at inhibitory synapses. Mechanistically, acts by binding and deforming membranes, thereby regulating actin dynamics to regulate cell migration and differentiation. Promotes cell repulsion and contact inhibition of locomotion: localizes to protrusions with curved edges and controls the duration of RAC1 activity in contact protrusions. In non-neuronal cells, may also play a role in cell migration by regulating the formation of lamellipodia and filopodia. This chain is SLIT-ROBO Rho GTPase-activating protein 2, found in Rattus norvegicus (Rat).